A 55-amino-acid chain; its full sequence is Large ribosomal subunit protein bL32 (55 aa).

Residues 1 to 27 are disordered; it reads MAVQQNKPTRSKRGMRRSHDALTTATL.

It belongs to the bacterial ribosomal protein bL32 family.

The protein is Large ribosomal subunit protein bL32 of Yersinia enterocolitica serotype O:8 / biotype 1B (strain NCTC 13174 / 8081).